Reading from the N-terminus, the 115-residue chain is 5-hydroxyisourate hydrolase (115 aa).

The tract at residues 1–23 (MSGLTTHILDQASGKPAAGVGVR) is disordered. Residues histidine 7, arginine 45, and tyrosine 112 each coordinate substrate.

This sequence belongs to the transthyretin family. 5-hydroxyisourate hydrolase subfamily. As to quaternary structure, homotetramer.

It carries out the reaction 5-hydroxyisourate + H2O = 5-hydroxy-2-oxo-4-ureido-2,5-dihydro-1H-imidazole-5-carboxylate + H(+). Its function is as follows. Catalyzes the hydrolysis of 5-hydroxyisourate (HIU) to 2-oxo-4-hydroxy-4-carboxy-5-ureidoimidazoline (OHCU). This is 5-hydroxyisourate hydrolase from Caulobacter vibrioides (strain ATCC 19089 / CIP 103742 / CB 15) (Caulobacter crescentus).